A 98-amino-acid chain; its full sequence is NADH-ubiquinone oxidoreductase chain 4L (98 aa).

3 helical membrane-spanning segments follow: residues Met1 to Met21, Ser29 to Leu49, and Val61 to Val81.

This sequence belongs to the complex I subunit 4L family. Core subunit of respiratory chain NADH dehydrogenase (Complex I) which is composed of 45 different subunits.

It is found in the mitochondrion inner membrane. It catalyses the reaction a ubiquinone + NADH + 5 H(+)(in) = a ubiquinol + NAD(+) + 4 H(+)(out). Its function is as follows. Core subunit of the mitochondrial membrane respiratory chain NADH dehydrogenase (Complex I) which catalyzes electron transfer from NADH through the respiratory chain, using ubiquinone as an electron acceptor. Part of the enzyme membrane arm which is embedded in the lipid bilayer and involved in proton translocation. In Tamandua tetradactyla (Southern anteater), this protein is NADH-ubiquinone oxidoreductase chain 4L (MT-ND4L).